The primary structure comprises 151 residues: Ubiquitin-like protein 4A-B (151 aa).

The Ubiquitin-like domain occupies Met-1–Glu-76.

As to quaternary structure, component of the BAT3 complex.

It localises to the cytoplasm. Its subcellular location is the cytosol. In terms of biological role, component of the BAT3 complex, a multiprotein complex involved in the post-translational delivery of tail-anchored (TA) membrane proteins to the endoplasmic reticulum membrane. TA membrane proteins, also named type II transmembrane proteins, contain a single C-terminal transmembrane region. The polypeptide is Ubiquitin-like protein 4A-B (ubl4ab) (Salmo salar (Atlantic salmon)).